The sequence spans 147 residues: Lysozyme C-1 (147 aa).

The first 18 residues, 1-18 (MKALIILGLLCLSVAVQG), serve as a signal peptide directing secretion. The C-type lysozyme domain maps to 19–147 (KVFERCELAR…VSSYVEGCSL (129 aa)). Disulfide bonds link cysteine 24–cysteine 145, cysteine 48–cysteine 133, cysteine 83–cysteine 99, and cysteine 95–cysteine 113. Catalysis depends on residues glutamate 53 and aspartate 71.

The protein belongs to the glycosyl hydrolase 22 family. Monomer. In terms of tissue distribution, expressed in stomach.

Its subcellular location is the secreted. The enzyme catalyses Hydrolysis of (1-&gt;4)-beta-linkages between N-acetylmuramic acid and N-acetyl-D-glucosamine residues in a peptidoglycan and between N-acetyl-D-glucosamine residues in chitodextrins.. Lysozymes have primarily a bacteriolytic function; those in tissues and body fluids are associated with the monocyte-macrophage system and enhance the activity of immunoagents. This is Lysozyme C-1 from Ovis aries (Sheep).